A 221-amino-acid polypeptide reads, in one-letter code: Phosphoribosylformylglycinamidine synthase subunit PurQ (221 aa).

Positions 3 to 221 (AAVLVFPGSN…MFASLMQVMA (219 aa)) constitute a Glutamine amidotransferase type-1 domain. Cysteine 87 functions as the Nucleophile in the catalytic mechanism. Active-site residues include histidine 195 and glutamate 197.

In terms of assembly, part of the FGAM synthase complex composed of 1 PurL, 1 PurQ and 2 PurS subunits.

Its subcellular location is the cytoplasm. The enzyme catalyses N(2)-formyl-N(1)-(5-phospho-beta-D-ribosyl)glycinamide + L-glutamine + ATP + H2O = 2-formamido-N(1)-(5-O-phospho-beta-D-ribosyl)acetamidine + L-glutamate + ADP + phosphate + H(+). The catalysed reaction is L-glutamine + H2O = L-glutamate + NH4(+). Its pathway is purine metabolism; IMP biosynthesis via de novo pathway; 5-amino-1-(5-phospho-D-ribosyl)imidazole from N(2)-formyl-N(1)-(5-phospho-D-ribosyl)glycinamide: step 1/2. Part of the phosphoribosylformylglycinamidine synthase complex involved in the purines biosynthetic pathway. Catalyzes the ATP-dependent conversion of formylglycinamide ribonucleotide (FGAR) and glutamine to yield formylglycinamidine ribonucleotide (FGAM) and glutamate. The FGAM synthase complex is composed of three subunits. PurQ produces an ammonia molecule by converting glutamine to glutamate. PurL transfers the ammonia molecule to FGAR to form FGAM in an ATP-dependent manner. PurS interacts with PurQ and PurL and is thought to assist in the transfer of the ammonia molecule from PurQ to PurL. The polypeptide is Phosphoribosylformylglycinamidine synthase subunit PurQ (Zymomonas mobilis subsp. mobilis (strain ATCC 31821 / ZM4 / CP4)).